Consider the following 473-residue polypeptide: Zinc finger and SCAN domain-containing protein 21 (473 aa).

A Glycyl lysine isopeptide (Lys-Gly) (interchain with G-Cter in SUMO2) cross-link involves residue lysine 27. One can recognise an SCAN box domain in the interval 45-127 (RQRFRQFGYH…TLLEDLEREL (83 aa)). Positions 127-169 (LDEPGHQVSTPPNEQKPVWEKISSSGTAKESPSSMQPQPLETS) are disordered. Polar residues predominate over residues 148–167 (ISSSGTAKESPSSMQPQPLE). Residues lysine 221 and lysine 232 each participate in a glycyl lysine isopeptide (Lys-Gly) (interchain with G-Cter in SUMO2) cross-link. Positions 244-272 (LENEKGTKPPLQEAGSKKGRESVPTKPTP) are disordered. The segment covering 258 to 272 (GSKKGRESVPTKPTP) has biased composition (basic and acidic residues). C2H2-type zinc fingers lie at residues 277–299 (YICA…RRTH), 305–327 (YVCT…YRTH), 333–354 (YDCK…QRMH), 360–382 (YQCK…YRIH), 388–410 (YQCN…QRLH), 416–438 (YKCK…HRIH), and 444–466 (YWCH…QRVH). A Glycyl lysine isopeptide (Lys-Gly) (interchain with G-Cter in SUMO2) cross-link involves residue lysine 349.

Belongs to the krueppel C2H2-type zinc-finger protein family.

It is found in the nucleus. Functionally, strong transcriptional activator. Plays an important role in spermatogenesis; essential for the progression of meiotic prophase I in spermatocytes. The protein is Zinc finger and SCAN domain-containing protein 21 (ZSCAN21) of Homo sapiens (Human).